The following is a 227-amino-acid chain: Phosphoribosylformylglycinamidine synthase subunit PurQ (227 aa).

Residues 2-227 enclose the Glutamine amidotransferase type-1 domain; the sequence is RWAIVRFPGA…FLGLVKEVAR (226 aa). Cys85 acts as the Nucleophile in catalysis. Residues His200 and Glu202 contribute to the active site.

Part of the FGAM synthase complex composed of 1 PurL, 1 PurQ and 2 PurS subunits.

The protein localises to the cytoplasm. The enzyme catalyses N(2)-formyl-N(1)-(5-phospho-beta-D-ribosyl)glycinamide + L-glutamine + ATP + H2O = 2-formamido-N(1)-(5-O-phospho-beta-D-ribosyl)acetamidine + L-glutamate + ADP + phosphate + H(+). It carries out the reaction L-glutamine + H2O = L-glutamate + NH4(+). The protein operates within purine metabolism; IMP biosynthesis via de novo pathway; 5-amino-1-(5-phospho-D-ribosyl)imidazole from N(2)-formyl-N(1)-(5-phospho-D-ribosyl)glycinamide: step 1/2. Functionally, part of the phosphoribosylformylglycinamidine synthase complex involved in the purines biosynthetic pathway. Catalyzes the ATP-dependent conversion of formylglycinamide ribonucleotide (FGAR) and glutamine to yield formylglycinamidine ribonucleotide (FGAM) and glutamate. The FGAM synthase complex is composed of three subunits. PurQ produces an ammonia molecule by converting glutamine to glutamate. PurL transfers the ammonia molecule to FGAR to form FGAM in an ATP-dependent manner. PurS interacts with PurQ and PurL and is thought to assist in the transfer of the ammonia molecule from PurQ to PurL. In Thermus thermophilus (strain ATCC 27634 / DSM 579 / HB8), this protein is Phosphoribosylformylglycinamidine synthase subunit PurQ.